Reading from the N-terminus, the 432-residue chain is Adenylosuccinate synthetase (432 aa).

Residues 13–19 (GDEGKGK) and 41–43 (GHT) contribute to the GTP site. The Proton acceptor role is filled by Asp-14. Mg(2+) is bound by residues Asp-14 and Gly-41. IMP-binding positions include 14–17 (DEGK), 39–42 (NAGH), Thr-130, Arg-144, Gln-225, Thr-240, and Arg-304. The active-site Proton donor is His-42. 300 to 306 (ATTGRSR) contacts substrate. GTP is bound by residues Arg-306, 332-334 (KLD), and 415-417 (STG).

Belongs to the adenylosuccinate synthetase family. Homodimer. Mg(2+) serves as cofactor.

Its subcellular location is the cytoplasm. It carries out the reaction IMP + L-aspartate + GTP = N(6)-(1,2-dicarboxyethyl)-AMP + GDP + phosphate + 2 H(+). It participates in purine metabolism; AMP biosynthesis via de novo pathway; AMP from IMP: step 1/2. Its function is as follows. Plays an important role in the de novo pathway of purine nucleotide biosynthesis. Catalyzes the first committed step in the biosynthesis of AMP from IMP. This is Adenylosuccinate synthetase from Yersinia pestis bv. Antiqua (strain Antiqua).